We begin with the raw amino-acid sequence, 59 residues long: U-myrmeciitoxin(01)-Mg5b (59 aa).

The N-terminal stretch at 1–21 (MRLSYLSLALAIIFVLTIMHA) is a signal peptide. Positions 22–38 (SNVEAKASADPEPDAVG) are excised as a propeptide.

As to expression, expressed by the venom gland.

Its subcellular location is the secreted. Its function is as follows. May have antimicrobial properties, like most ant linear peptides. The chain is U-myrmeciitoxin(01)-Mg5b from Myrmecia gulosa (Red bulldog ant).